Consider the following 679-residue polypeptide: Penicillin-binding protein PbpB (679 aa).

The disordered stretch occupies residues 1-74 (MSRAAPRRAS…STRARRTRQV (74 aa)). Residues 1-90 (MSRAAPRRAS…GASFVFRHRT (90 aa)) lie on the Cytoplasmic side of the membrane. The segment covering 42-54 (ARQAQEATKSRPA) has biased composition (polar residues). The helical transmembrane segment at 91 to 111 (GNAVILVLMLVAATQLFFLQV) threads the bilayer. At 112 to 679 (SHAAGLRAQA…PGPPLVLQAT (568 aa)) the chain is on the extracellular side. S386 functions as the Acyl-ester intermediate in the catalytic mechanism.

The protein belongs to the transpeptidase family. As to quaternary structure, interacts with Wag31. Post-translationally, cleaved by Rip1 in response to oxidative stress (H(2)O(2)), prevented by Wag31. Cleavage probably occurs near residues 102-103.

The protein resides in the cell membrane. The protein operates within cell wall biogenesis; peptidoglycan biosynthesis. Synthesis of cross-linked peptidoglycan from the lipid intermediates. The protein is Penicillin-binding protein PbpB (pbpB) of Mycobacterium tuberculosis (strain ATCC 25618 / H37Rv).